Consider the following 565-residue polypeptide: Potassium-transporting ATPase potassium-binding subunit (565 aa).

Helical transmembrane passes span 6–26 (LMLLGLLILLLLILAPLLGSL), 63–83 (LLAILAFNLLGIVLLFALLMA), 132–152 (GLGVQNFLSAASGIAVLFALI), 175–195 (LYVLLPLSLLLSLLFVSQGVI), 250–270 (LSNLLQMVAIFLLPTALCFAF), 283–303 (LLWTMSLIFIVAAGCVMYAEL), 327–347 (FGILASALYAVVTTAASCGAV), 354–374 (FTALGGMVPMWLMQIGEVVFG), 379–399 (GLYGMLLFVLLTVFIAGLMIG), 418–438 (ALAILIPPALVLTGSAIALLC), 483–503 (LLLALVMLIGRFGVIIPVMAI), and 524–544 (GALFVSLLIGTILLVGALTFI).

The protein belongs to the KdpA family. The system is composed of three essential subunits: KdpA, KdpB and KdpC.

Its subcellular location is the cell inner membrane. In terms of biological role, part of the high-affinity ATP-driven potassium transport (or Kdp) system, which catalyzes the hydrolysis of ATP coupled with the electrogenic transport of potassium into the cytoplasm. This subunit binds the periplasmic potassium ions and delivers the ions to the membrane domain of KdpB through an intramembrane tunnel. The polypeptide is Potassium-transporting ATPase potassium-binding subunit (Edwardsiella ictaluri (strain 93-146)).